The sequence spans 475 residues: Stromelysin-1 (475 aa).

An N-terminal signal peptide occupies residues 1–17 (MKGLPVLLWLCTAVCSS). The propeptide at 18–97 (YPLHGSEEDA…PRCGVPDVGG (80 aa)) is activation peptide. The short motif at 88–95 (PRCGVPDV) is the Cysteine switch element. Zn(2+) is bound at residue C90. N-linked (GlcNAc...) asparagine glycosylation is present at N118. The Ca(2+) site is built by D122 and D156. Residues H166 and D168 each contribute to the Zn(2+) site. Residues D173, G174, G176, and V178 each coordinate Ca(2+). Zn(2+) is bound at residue H181. The Ca(2+) site is built by G188, N190, and D192. A Zn(2+)-binding site is contributed by H194. Ca(2+) is bound by residues D196, D197, and E199. H216 lines the Zn(2+) pocket. E217 is an active-site residue. The Zn(2+) site is built by H220 and H226. Hemopexin repeat units follow at residues 285–334 (LPMC…WPSL), 335–381 (PSNM…GLPE), 383–431 (VQKI…FPGI), and 432–475 (GTKV…WFNC). An intrachain disulfide couples C288 to C475. Position 295 (D295) interacts with Ca(2+). 2 residues coordinate Ca(2+): D387 and D436.

Belongs to the peptidase M10A family. The cofactor is Ca(2+). Zn(2+) serves as cofactor.

It localises to the secreted. The protein resides in the extracellular space. It is found in the extracellular matrix. It catalyses the reaction Preferential cleavage where P1', P2' and P3' are hydrophobic residues.. With respect to regulation, inhibited by a synthetic peptide corresponding to the inhibitory cysteine switch motif. Inhibited by ethylenediaminetetraacetic acid (EDTA), 1,10-pheanthroline, 2-mecaptoethanol, dithiothreitol and metalloproteinase inhibitor protein TIMP. Functionally, can degrade fibronectin, laminin, gelatins of type I, III, IV, and V; collagens III, IV, X, and IX, and cartilage proteoglycans. Activates procollagenase. Its function is as follows. Metalloproteinase with a rather broad substrate specificity that can degrade fibronectin, laminin, gelatins of type I, III, IV, and V; collagens III, IV, X, and IX, and cartilage proteoglycans. Activates different molecules including growth factors, plasminogen or other matrix metalloproteinases such as MMP9. Once released into the extracellular matrix (ECM), the inactive pro-enzyme is activated by the plasmin cascade signaling pathway. Also acts intracellularly. For example, in dopaminergic neurons, gets activated by the serine protease HTRA2 upon stress and plays a pivotal role in DA neuronal degeneration by mediating microglial activation and alpha-synuclein/SNCA cleavage. In addition, plays a role in immune response and possesses antiviral activity against various viruses. Mechanistically, translocates from the cytoplasm into the cell nucleus upon virus infection to influence NF-kappa-B activities. The chain is Stromelysin-1 (Mmp3) from Rattus norvegicus (Rat).